Consider the following 712-residue polypeptide: Effector protein HopM1 (712 aa).

Residues 22–58 are disordered; sequence DTVPAQTAHPNAVTAGMNPPLTPDQSGSHATESSSAG. The span at 44 to 57 shows a compositional bias: polar residues; that stretch reads PDQSGSHATESSSA.

Interacts with the chaperone ShcM. Interacts with host plant BIG5/ATMIN7.

The protein localises to the secreted. Its subcellular location is the host membrane. Its function is as follows. Involved in the suppression of basal resistance and promotion of disease symptoms in plants. Mediates the ubiquitination and degradation, via the host proteasome, of a low-abundance immunity-associated protein in Arabidopsis thaliana. May be involved in the inhibition of a host vesicle trafficking pathway. The sequence is that of Effector protein HopM1 (hopM1) from Pseudomonas syringae pv. tomato (strain ATCC BAA-871 / DC3000).